Reading from the N-terminus, the 374-residue chain is Transcription factor NF-E2 45 kDa subunit (374 aa).

2 disordered regions span residues 1–21 (MSPCPPQQSRNRVTQLPIPEP) and 40–61 (LNAPSEPSFEPPAPVPYPGPPP). Residues 1-83 (MSPCPPQQSR…PGFPLPAPPY (83 aa)) form a required for interaction with MAPK8 region. Residues 1 to 207 (MSPCPPQQSR…PPAETPLALE (207 aa)) are transactivation domain. Positions 48-61 (FEPPAPVPYPGPPP) are enriched in pro residues. Short sequence motifs (PXY motif) lie at residues 61–65 (PPPSY) and 79–83 (PAPPY). The interval 132–165 (LSAGPSKPQEDPESDSGLSLNYSDAESLELEGTE) is disordered. Ser158 is subject to Phosphoserine; by MAPK8. A Phosphoserine; by PKA modification is found at Ser171. Positions 207 to 227 (EPSSGPVRAKPTARGEAGSRD) are disordered. Residues 267–330 (LVRDIRRRGK…EVMRQQLTDL (64 aa)) enclose the bZIP domain. A basic motif region spans residues 269 to 288 (RDIRRRGKNKVAAQNCRKRK). The leucine-zipper stretch occupies residues 292–299 (IVQLEREL). A Glycyl lysine isopeptide (Lys-Gly) (interchain with G-Cter in SUMO); alternate cross-link involves residue Lys369. Lys369 is covalently cross-linked (Glycyl lysine isopeptide (Lys-Gly) (interchain with G-Cter in SUMO1); alternate).

It belongs to the bZIP family. CNC subfamily. As to quaternary structure, homodimer; can bind DNA as a homodimer. Erythroid transcription activator nuclear factor erythroid-derived 2 (NF-E2), composed of a heterodimer of NFE2 and MAFK, possesses transactivation activity on beta-globin. Also forms high affinity heterodimer with MAFG; the interaction promotes erythropoiesis. Interacts (via the PXY motif 1) with ITCH (via the WW 1 domain); the interaction promotes 'Lys63'-linked ubiquitination of NFE2, translocates it to the cytoplasm and inhibits its transactivation activity. Interacts with KMT2D/MLL2; the interaction promotes transactivation of the beta-globin locus. Interacts with MAPK8 (phosphorylated form); the interaction leads to phosphorylation of NFE2 in undifferentiated cells. Post-translationally, phosphorylated on serine residues. In undifferentiated erythrocytes, phosphorylated by MAPK8 which then leads to ubiquitination and protein degradation. Sumoylated. Sumoylation is required for translocation to nuclear bodies PODs, anchoring to the gene loci, and transactivation of the beta-globin gene. In terms of processing, ubiquitinated mainly by 'Lys63'-linked ubiquitin. Polyubiquitination with 'Lys63'-linked ubiquitin by ITCH retains NFE2 in the cytoplasm preventing its transactivation activity. In undifferentiated erythrocyte, is ubiquitinated after MAPK8-mediatd phosphorylation leading to protein degradation.

It is found in the nucleus. It localises to the cytoplasm. Functionally, component of the NF-E2 complex essential for regulating erythroid and megakaryocytic maturation and differentiation. Binds to the hypersensitive site 2 (HS2) of the beta-globin control region (LCR). This subunit (NFE2) recognizes the TCAT/C sequence of the AP-1-like core palindrome present in a number of erythroid and megakaryocytic gene promoters. Requires MAFK or other small MAF proteins for binding to the NF-E2 motif. May play a role in all aspects of hemoglobin production from globin and heme synthesis to procurement of iron. This chain is Transcription factor NF-E2 45 kDa subunit (NFE2), found in Bos taurus (Bovine).